The chain runs to 513 residues: MRKIEFFDTSLRDGEQTPGVIFSIAEKVTIAKQLEKWGISVIEAGFPAASPDSFEAVKQISKALKETAVTALARCVITDIDKAVEAVREAQHPQIHVFIATSPIHMKYKFKISPDEVLKTIDKCVRHAHEQVEVVEFSPEDATRTEPEFLLKAVQTAVDAGATYINIPDTVGYTTPEEYGKIFKMLIDNIKADREIIFSPHCHDDLGMAVANSLAAIKAGAGRVEGTVNGIGERAGNAAIEEIAVALHIRKDYYQAKSPLVLAETMATAELISQFSGIAIPKNKAVVGANAFAHESGIHQDGVLKNAETYEIISPELVGIKHNSLPLGKLSGRHAFTEKLTELNISYDAKELPNLFERFKRLADKKKEITDADIHALFTGETVKNLAGFILNNVQIDGHKALVELKNQDAEIYVSQGEGSGSVDAIFQAIDKVFNYQLKLISYSVDAVTNGIDAQATTVVSVENLATGTIFNAKGVDYDVLKGSAIAYMNANVLVQKENSQGKVEQISAHDGI.

In terms of domain architecture, Pyruvate carboxyltransferase spans 4–266 (IEFFDTSLRD…KSPLVLAETM (263 aa)). Mn(2+)-binding residues include Asp13, His201, His203, and Asn237. The regulatory domain stretch occupies residues 390–513 (ILNNVQIDGH…VEQISAHDGI (124 aa)).

This sequence belongs to the alpha-IPM synthase/homocitrate synthase family. LeuA type 1 subfamily. As to quaternary structure, homodimer. Mn(2+) is required as a cofactor.

It is found in the cytoplasm. It catalyses the reaction 3-methyl-2-oxobutanoate + acetyl-CoA + H2O = (2S)-2-isopropylmalate + CoA + H(+). The protein operates within amino-acid biosynthesis; L-leucine biosynthesis; L-leucine from 3-methyl-2-oxobutanoate: step 1/4. Its function is as follows. Catalyzes the condensation of the acetyl group of acetyl-CoA with 3-methyl-2-oxobutanoate (2-ketoisovalerate) to form 3-carboxy-3-hydroxy-4-methylpentanoate (2-isopropylmalate). The protein is 2-isopropylmalate synthase of Lactococcus lactis subsp. cremoris (strain SK11).